A 277-amino-acid chain; its full sequence is MNSLLFVYGTLRKHEKNHHLLAQSACINEQARTKGSLFAAKEGPTVVFNDEDEGYIYGEVYEADELCIHKLDQFFQGYHKQTVFVETDVGIKIALIYFMNKDGCAGFTKISSGDWKEHQMISKSKNPIYYFAYGSCMDNARFQKAGVDHYFQDPVGRAVLKGYTTRFTLKREDGSRADMLEDGGTTEGVLYRIPYSALSYLYKREGVESLTYRPAFVDVEAGGRHYKDCLTFLVLQKEAEIAPPQHYQIEIERGAELYLSPEFTEKLKRHMNSLPKG.

A substrate-binding site is contributed by 8 to 11 (YGTL). Residue Glu-205 is the Proton acceptor of the active site.

This sequence belongs to the gamma-glutamylcyclotransferase family.

In terms of biological role, putative gamma-glutamylcyclotransferase. The sequence is that of Putative gamma-glutamylcyclotransferase YkqA (ykqA) from Bacillus subtilis (strain 168).